Reading from the N-terminus, the 236-residue chain is Endonuclease V (236 aa).

Residues aspartate 47 and aspartate 115 each coordinate Mg(2+).

This sequence belongs to the endonuclease V family. Requires Mg(2+) as cofactor.

Its subcellular location is the cytoplasm. The catalysed reaction is Endonucleolytic cleavage at apurinic or apyrimidinic sites to products with a 5'-phosphate.. DNA repair enzyme involved in the repair of deaminated bases. Selectively cleaves double-stranded DNA at the second phosphodiester bond 3' to a deoxyinosine leaving behind the intact lesion on the nicked DNA. The chain is Endonuclease V from Xanthomonas campestris pv. campestris (strain 8004).